The chain runs to 497 residues: Probable cytosol aminopeptidase (497 aa).

Positions 264 and 269 each coordinate Mn(2+). The active site involves Lys276. Mn(2+) is bound by residues Asp287, Asp346, and Glu348. Arg350 is a catalytic residue.

It belongs to the peptidase M17 family. Requires Mn(2+) as cofactor.

The protein resides in the cytoplasm. It carries out the reaction Release of an N-terminal amino acid, Xaa-|-Yaa-, in which Xaa is preferably Leu, but may be other amino acids including Pro although not Arg or Lys, and Yaa may be Pro. Amino acid amides and methyl esters are also readily hydrolyzed, but rates on arylamides are exceedingly low.. The catalysed reaction is Release of an N-terminal amino acid, preferentially leucine, but not glutamic or aspartic acids.. In terms of biological role, presumably involved in the processing and regular turnover of intracellular proteins. Catalyzes the removal of unsubstituted N-terminal amino acids from various peptides. This Persephonella marina (strain DSM 14350 / EX-H1) protein is Probable cytosol aminopeptidase.